The chain runs to 65 residues: Hainantoxin-X (65 aa).

A signal peptide spans 1–20 (MNMKILVLVAVLCLVVSTHA). A propeptide spanning residues 21 to 37 (ERHSKTDMEDSPMIQER) is cleaved from the precursor. 3 disulfides stabilise this stretch: C39/C56, C46/C59, and C55/C64.

This sequence belongs to the neurotoxin 36 family. 02 subfamily. As to expression, expressed by the venom gland.

The protein resides in the secreted. Functionally, reversibly blocks N-type calcium channels (Cav2.2/CACNA1B) in rat dorsal root ganglion cells. Elicits no toxic symptoms in either vertebrates or invertebrates during a period of 48 hours post-injection, when it was assayed in vivo by direct injection into mice and cockroaches. This chain is Hainantoxin-X, found in Cyriopagopus hainanus (Chinese bird spider).